The primary structure comprises 434 residues: MNAEDVKGFFASRESLDMEQYLVRDYYLECVGDIETALAHFCSEQSTAQWKRVGVDEDFRPMHAAKVIDYDVIEELEQLSYPVKHSETGKIHACRVTIAHPHCNFGPKIPNLLTAVCGEGTYFTPGVPVVKLMDIHFPDIYLADFEGPKFGIDGLRNILNAHGRPIFFGVVKPNIGLSPEEFSEIAYQSWLGGLDIAKDDEMLADVTWSSIEERAAHLGKARRKAEAETGEPKIYLANITDEVDSLMEKHDIAVRNGANALLINALPVGLSAVRMLSNYTQVPLIGHFPFIASFSRMEKYGIRSKVMTKLQRLAGLDVVIMPGFGDRMMTPEEEVVENVIECTKPMGRIKPCLPVPGGSDSALTLGTVWRKVGSVDFGFVPGRGVFGHPMGPRAGAKSIRQAWEAIEQGISIETWAETHPELQAMIDQSALKKQ.

The Mg(2+) site is built by lysine 198, aspartate 200, and glutamate 201. Residue lysine 198 is modified to N6-carboxylysine.

Belongs to the RuBisCO large chain family. Type IV subfamily. As to quaternary structure, homodimer. Requires Mg(2+) as cofactor.

Functionally, may be involved in sulfur metabolism and oxidative stress response. Does not show RuBisCO activity. This Chlorobaculum thiosulfatiphilum (Chlorobium limicola f.sp. thiosulfatophilum) protein is Ribulose bisphosphate carboxylase-like protein.